We begin with the raw amino-acid sequence, 169 residues long: Ribosome maturation factor RimM (169 aa).

One can recognise a PRC barrel domain in the interval 92-166 (NKEYYWNDIF…IVIDLTNLNN (75 aa)).

It belongs to the RimM family. Binds ribosomal protein uS19.

Its subcellular location is the cytoplasm. Its function is as follows. An accessory protein needed during the final step in the assembly of 30S ribosomal subunit, possibly for assembly of the head region. Essential for efficient processing of 16S rRNA. May be needed both before and after RbfA during the maturation of 16S rRNA. It has affinity for free ribosomal 30S subunits but not for 70S ribosomes. This chain is Ribosome maturation factor RimM, found in Buchnera aphidicola subsp. Cinara cedri (strain Cc).